A 301-amino-acid polypeptide reads, in one-letter code: tRNA pseudouridine synthase B (301 aa).

Asp47 functions as the Nucleophile in the catalytic mechanism.

The protein belongs to the pseudouridine synthase TruB family. Type 1 subfamily.

The catalysed reaction is uridine(55) in tRNA = pseudouridine(55) in tRNA. Functionally, responsible for synthesis of pseudouridine from uracil-55 in the psi GC loop of transfer RNAs. This is tRNA pseudouridine synthase B from Cereibacter sphaeroides (strain ATCC 17023 / DSM 158 / JCM 6121 / CCUG 31486 / LMG 2827 / NBRC 12203 / NCIMB 8253 / ATH 2.4.1.) (Rhodobacter sphaeroides).